The following is a 32-amino-acid chain: Trypsin inhibitor 3 (32 aa).

Disulfide bonds link C6/C23, C13/C25, and C19/C31.

Belongs to the protease inhibitor I7 (squash-type serine protease inhibitor) family.

Its subcellular location is the secreted. Its function is as follows. Inhibits trypsin. This is Trypsin inhibitor 3 from Cucurbita pepo (Vegetable marrow).